A 149-amino-acid polypeptide reads, in one-letter code: Ribonuclease pancreatic (149 aa).

The first 25 residues, 1 to 25, serve as a signal peptide directing secretion; the sequence is MGLEKSFILFPLLILVLGWVQSSLG. The substrate site is built by K32 and R35. H37 (proton acceptor) is an active-site residue. 4 disulfide bridges follow: C51-C109, C65-C120, C83-C135, and C90-C97. An N-linked (GlcNAc...) asparagine glycan is attached at N59. 66–70 serves as a coordination point for substrate; that stretch reads KPVNT. N87 carries an N-linked (GlcNAc...) asparagine glycan. Substrate is bound by residues K91 and R110. H144 functions as the Proton donor in the catalytic mechanism.

It belongs to the pancreatic ribonuclease family. As to quaternary structure, monomer. Interacts with and forms tight 1:1 complexes with RNH1. Dimerization of two such complexes may occur. Interaction with RNH1 inhibits this protein. In terms of tissue distribution, pancreas.

It is found in the secreted. The enzyme catalyses an [RNA] containing cytidine + H2O = an [RNA]-3'-cytidine-3'-phosphate + a 5'-hydroxy-ribonucleotide-3'-[RNA].. It carries out the reaction an [RNA] containing uridine + H2O = an [RNA]-3'-uridine-3'-phosphate + a 5'-hydroxy-ribonucleotide-3'-[RNA].. Its function is as follows. Endonuclease that catalyzes the cleavage of RNA on the 3' side of pyrimidine nucleotides. Acts on single-stranded and double-stranded RNA. This Abrothrix jelskii (Jelski's altiplano mouse) protein is Ribonuclease pancreatic (RNASE1).